The primary structure comprises 277 residues: 3-methyl-2-oxobutanoate hydroxymethyltransferase (277 aa).

Positions 53 and 96 each coordinate Mg(2+). Residues 53-54 (DS), aspartate 96, and lysine 126 each bind 3-methyl-2-oxobutanoate. Glutamate 128 contributes to the Mg(2+) binding site. The active-site Proton acceptor is the glutamate 195.

This sequence belongs to the PanB family. In terms of assembly, homodecamer; pentamer of dimers. The cofactor is Mg(2+).

Its subcellular location is the cytoplasm. The enzyme catalyses 3-methyl-2-oxobutanoate + (6R)-5,10-methylene-5,6,7,8-tetrahydrofolate + H2O = 2-dehydropantoate + (6S)-5,6,7,8-tetrahydrofolate. It participates in cofactor biosynthesis; (R)-pantothenate biosynthesis; (R)-pantoate from 3-methyl-2-oxobutanoate: step 1/2. In terms of biological role, catalyzes the reversible reaction in which hydroxymethyl group from 5,10-methylenetetrahydrofolate is transferred onto alpha-ketoisovalerate to form ketopantoate. In Chlorobaculum parvum (strain DSM 263 / NCIMB 8327) (Chlorobium vibrioforme subsp. thiosulfatophilum), this protein is 3-methyl-2-oxobutanoate hydroxymethyltransferase.